The primary structure comprises 180 residues: Peptide deformylase (180 aa).

The Fe cation site is built by Cys96 and His138. Glu139 is an active-site residue. His142 contacts Fe cation.

This sequence belongs to the polypeptide deformylase family. The cofactor is Fe(2+).

It carries out the reaction N-terminal N-formyl-L-methionyl-[peptide] + H2O = N-terminal L-methionyl-[peptide] + formate. Its function is as follows. Removes the formyl group from the N-terminal Met of newly synthesized proteins. Requires at least a dipeptide for an efficient rate of reaction. N-terminal L-methionine is a prerequisite for activity but the enzyme has broad specificity at other positions. This Rhodopseudomonas palustris (strain BisA53) protein is Peptide deformylase.